The chain runs to 379 residues: Cytochrome b (379 aa).

4 helical membrane-spanning segments follow: residues 33-53 (FGSL…FLAM), 77-98 (WTIR…FIHV), 113-133 (WNIG…GYVL), and 178-198 (FFAL…IHLL). Positions 83 and 97 each coordinate heme b. Residues His-182 and His-196 each contribute to the heme b site. His-201 lines the a ubiquinone pocket. 4 helical membrane passes run 226–246 (TKDF…TLFY), 288–308 (LGGV…PFLQ), 320–340 (LSQF…WIGG), and 347–367 (FISI…FIMP).

It belongs to the cytochrome b family. As to quaternary structure, the cytochrome bc1 complex contains 11 subunits: 3 respiratory subunits (MT-CYB, CYC1 and UQCRFS1), 2 core proteins (UQCRC1 and UQCRC2) and 6 low-molecular weight proteins (UQCRH/QCR6, UQCRB/QCR7, UQCRQ/QCR8, UQCR10/QCR9, UQCR11/QCR10 and a cleavage product of UQCRFS1). This cytochrome bc1 complex then forms a dimer. Heme b serves as cofactor.

The protein resides in the mitochondrion inner membrane. In terms of biological role, component of the ubiquinol-cytochrome c reductase complex (complex III or cytochrome b-c1 complex) that is part of the mitochondrial respiratory chain. The b-c1 complex mediates electron transfer from ubiquinol to cytochrome c. Contributes to the generation of a proton gradient across the mitochondrial membrane that is then used for ATP synthesis. The polypeptide is Cytochrome b (MT-CYB) (Lepilemur randrianasoloi (Randrianasoli's sportive lemur)).